A 252-amino-acid polypeptide reads, in one-letter code: Type III pantothenate kinase (252 aa).

6–13 (DVGNTHTT) contacts ATP. 104-107 (GADR) is a substrate binding site. Residue D106 is the Proton acceptor of the active site. Residue D126 coordinates K(+). Position 129 (T129) interacts with ATP. T180 contacts substrate.

It belongs to the type III pantothenate kinase family. Homodimer. NH4(+) serves as cofactor. The cofactor is K(+).

Its subcellular location is the cytoplasm. The catalysed reaction is (R)-pantothenate + ATP = (R)-4'-phosphopantothenate + ADP + H(+). It participates in cofactor biosynthesis; coenzyme A biosynthesis; CoA from (R)-pantothenate: step 1/5. In terms of biological role, catalyzes the phosphorylation of pantothenate (Pan), the first step in CoA biosynthesis. This Fervidobacterium nodosum (strain ATCC 35602 / DSM 5306 / Rt17-B1) protein is Type III pantothenate kinase.